A 3971-amino-acid chain; its full sequence is Mycosubtilin synthase subunit A (3971 aa).

The tract at residues 160–479 (EPEADELAFI…ELEDIDLGRV (320 aa)) is acyl-CoA ligase. The region spanning 578–653 (TPIHEIETAL…DLAAFLVENH (76 aa)) is the Carrier 1 domain. Ser-613 carries the post-translational modification O-(pantetheine 4'-phosphoryl)serine. The Ketosynthase family 3 (KS3) domain maps to 669-1092 (SKDIAIIGMS…GTNAHVVLEE (424 aa)). Residues Cys-843, His-974, and His-1014 each act as for beta-ketoacyl synthase activity in the active site. One can recognise a Carrier 2 domain in the interval 1290-1365 (THIESFLKTV…SVVDYLAENV (76 aa)). Ser-1324 carries the post-translational modification O-(pantetheine 4'-phosphoryl)serine. Residues 1434–1456 (ESEISQDKTSLSPKSVTAKKNSA) are disordered. Over residues 1440–1456 (DKTSLSPKSVTAKKNSA) the composition is skewed to polar residues. The tract at residues 1529–1856 (IIAERSDGSR…SYFEQSQVPI (328 aa)) is GSA-AT. Residue Lys-1759 is modified to N6-(pyridoxal phosphate)lysine. The segment at 1921–1942 (GGFIPEGPDSPNDGGHKEPETY) is disordered. A condensation 1 region spans residues 1938 to 2240 (EPETYELSPE…NMVPVKNTAS (303 aa)). Residues 2405–2480 (EPENETELQI…ELANFIRGEK (76 aa)) form the Carrier 3 domain. At Ser-2440 the chain carries O-(pantetheine 4'-phosphoryl)serine. Residues 2492–2781 (QKAFYRTSPA…QTMGIRTKPQ (290 aa)) form a condensation 2 region. Residues 2937–3823 (PHNDTVCQWF…RNHPAGRKIF (887 aa)) are domain 1 (asparagine-activating). The tract at residues 2967–3364 (TYGQLNERVN…KVEAVQKAVV (398 aa)) is adenylation 1. Residues 3442–3517 (PPGNEVESKL…QLANMALRME (76 aa)) enclose the Carrier 4 domain. Ser-3477 carries the post-translational modification O-(pantetheine 4'-phosphoryl)serine. The tract at residues 3529 to 3818 (KISYYPVSSA…NTLVIRNHPA (290 aa)) is condensation 3.

It belongs to the ATP-dependent AMP-binding enzyme family. Pyridoxal 5'-phosphate is required as a cofactor. The cofactor is pantetheine 4'-phosphate.

Its function is as follows. This protein is a multifunctional enzyme, able to activate a long chain fatty acid and link it with the amino acid Asn as part of the synthesis of mycosubtilin. The activation sites consist of individual domains. The chain is Mycosubtilin synthase subunit A (mycA) from Bacillus subtilis.